Reading from the N-terminus, the 254-residue chain is MRKMKMNKFNIDNLNLFYGENQALKQICLPIPNRQVTALIGPSGCGKSTLLRCLNRMNDLIEGVKIDGLLSMDGEDVYGNIDVAQLRIKVGMVFQKPNPFPMSIYENVAYGLRAQGIKDKKVLDGVVEQSLRGAALWDEVKDRLKSHAFSLSGGQQQRLCIARTIAMEPEVILMDEPTSALDPIATKKIEDLMESLKKDFTIVIVTHSMQQARRISDRTAFFLMGELVEHDDTHALFSNPRDDRTRGYVNGDFG.

An ABC transporter domain is found at 9-249 (FNIDNLNLFY…PRDDRTRGYV (241 aa)). 41-48 (GPSGCGKS) serves as a coordination point for ATP.

This sequence belongs to the ABC transporter superfamily. Phosphate importer (TC 3.A.1.7) family. As to quaternary structure, the complex is composed of two ATP-binding proteins (PstB), two transmembrane proteins (PstC and PstA) and a solute-binding protein (PstS).

It is found in the cell inner membrane. The enzyme catalyses phosphate(out) + ATP + H2O = ADP + 2 phosphate(in) + H(+). Part of the ABC transporter complex PstSACB involved in phosphate import. Responsible for energy coupling to the transport system. This chain is Phosphate import ATP-binding protein PstB 2, found in Photobacterium profundum (strain SS9).